Here is a 907-residue protein sequence, read N- to C-terminus: Protein translocase subunit SecA (907 aa).

ATP contacts are provided by residues Q87, G105–T109, and D512. Zn(2+) is bound by residues C891, C893, C902, and H903.

The protein belongs to the SecA family. As to quaternary structure, monomer and homodimer. Part of the essential Sec protein translocation apparatus which comprises SecA, SecYEG and auxiliary proteins SecDF-YajC and YidC. Requires Zn(2+) as cofactor.

It is found in the cell inner membrane. It localises to the cytoplasm. The catalysed reaction is ATP + H2O + cellular proteinSide 1 = ADP + phosphate + cellular proteinSide 2.. In terms of biological role, part of the Sec protein translocase complex. Interacts with the SecYEG preprotein conducting channel. Has a central role in coupling the hydrolysis of ATP to the transfer of proteins into and across the cell membrane, serving both as a receptor for the preprotein-SecB complex and as an ATP-driven molecular motor driving the stepwise translocation of polypeptide chains across the membrane. This chain is Protein translocase subunit SecA, found in Shewanella loihica (strain ATCC BAA-1088 / PV-4).